The primary structure comprises 314 residues: Putative peptide transport system permease protein BruAb2_1031 (314 aa).

The next 6 membrane-spanning stretches (helical) occupy residues 12–32 (AIPV…LLPG), 101–121 (LALL…VVAA), 135–155 (LALL…VILF), 177–197 (WLRS…GYLA), 237–257 (VSVL…SVVI), and 286–306 (MLFL…LYTI). The 210-residue stretch at 95-304 (LPVTISLALL…AINVLVDILY (210 aa)) folds into the ABC transmembrane type-1 domain.

The protein belongs to the binding-protein-dependent transport system permease family. In terms of assembly, the complex is composed of two ATP-binding proteins (BruAb2_1033 and BruAb2_1034), two transmembrane proteins (BruAb2_1031 and BruAb2_1032) and a solute-binding protein (BruAb2_1030).

Its subcellular location is the cell inner membrane. In terms of biological role, probably part of an ABC transporter complex that could be involved in peptide import. Probably responsible for the translocation of the substrate across the membrane. This Brucella abortus biovar 1 (strain 9-941) protein is Putative peptide transport system permease protein BruAb2_1031.